Here is a 170-residue protein sequence, read N- to C-terminus: Lipoprotein signal peptidase (170 aa).

A run of 2 helical transmembrane segments spans residues 71-91 (YFFI…ILEN) and 97-116 (AIAY…DRVF). Residues D122 and D140 contribute to the active site. A helical membrane pass occupies residues 131-151 (WHWPAFNLADIAIVLGALLFV).

The protein belongs to the peptidase A8 family.

Its subcellular location is the cell inner membrane. The catalysed reaction is Release of signal peptides from bacterial membrane prolipoproteins. Hydrolyzes -Xaa-Yaa-Zaa-|-(S,diacylglyceryl)Cys-, in which Xaa is hydrophobic (preferably Leu), and Yaa (Ala or Ser) and Zaa (Gly or Ala) have small, neutral side chains.. It functions in the pathway protein modification; lipoprotein biosynthesis (signal peptide cleavage). Its function is as follows. This protein specifically catalyzes the removal of signal peptides from prolipoproteins. The polypeptide is Lipoprotein signal peptidase (Serratia marcescens).